Reading from the N-terminus, the 101-residue chain is Urease subunit beta (101 aa).

The protein belongs to the urease beta subunit family. In terms of assembly, heterotrimer of UreA (gamma), UreB (beta) and UreC (alpha) subunits. Three heterotrimers associate to form the active enzyme.

The protein resides in the cytoplasm. It carries out the reaction urea + 2 H2O + H(+) = hydrogencarbonate + 2 NH4(+). Its pathway is nitrogen metabolism; urea degradation; CO(2) and NH(3) from urea (urease route): step 1/1. The sequence is that of Urease subunit beta from Pseudomonas aeruginosa (strain LESB58).